A 228-amino-acid chain; its full sequence is Ran-binding protein 1 homolog a (228 aa).

Residues 1–13 (MATNEPEHEHRDE) are compositionally biased toward basic and acidic residues. 2 disordered regions span residues 1–30 (MATNEPEHEHRDEEEAGANEDEDTGAQVAP) and 159–228 (SEEE…GPST). The segment covering 14–24 (EEAGANEDEDT) has biased composition (acidic residues). The RanBD1 domain occupies 27 to 162 (QVAPIVRLEE…FKEVAESEEE (136 aa)). The span at 179 to 228 (LTVEETKTEEKTEAKAVETAKTEVKAEEKKESEAEKSGEAKKTEESGPST) shows a compositional bias: basic and acidic residues.

In terms of assembly, interacts with the GTP-bound form of RAN1, RAN2 and RAN3. In terms of tissue distribution, ubiquitous. Preferentially expressed in root tips and gynoecium.

It localises to the nucleus. Its subcellular location is the nuclear pore complex. The chain is Ran-binding protein 1 homolog a (RANBP1A) from Arabidopsis thaliana (Mouse-ear cress).